The chain runs to 295 residues: Proline-rich protein 32 (295 aa).

Disordered stretches follow at residues 10–48 and 101–120; these read GHAPSPTAVAAAENGNREPRPSLPFQCPKDDAGSWGHPG and ATGEVNSSEGPAGWRQSGQD.

The polypeptide is Proline-rich protein 32 (PRR32) (Bos taurus (Bovine)).